Reading from the N-terminus, the 919-residue chain is Calcium-transporting ATPase type 2C member 1 (919 aa).

The Cytoplasmic segment spans residues 1–70; it reads MKVARFQKIP…NEFDISEDEP (70 aa). The helical transmembrane segment at 71 to 91 threads the bilayer; that stretch reads LWKKYISQFKNPLIMLLLASA. Residues 92–104 lie on the Lumenal side of the membrane; it reads VISVLMHQFDDAV. Residues 105–123 traverse the membrane as a helical segment; sequence SITVAILIVVTVAFVQEYR. The Cytoplasmic segment spans residues 124–262; the sequence is SEKSLEELSK…APKTPLQKSM (139 aa). The helical transmembrane segment at 263-282 threads the bilayer; the sequence is DLLGKQLSFYSFGIIGIIML. Topologically, residues 283–294 are lumenal; the sequence is VGWLLGKDILEM. Residues 295 to 312 traverse the membrane as a helical segment; it reads FTISVSLAVAAIPEGLPI. Residues valine 303, alanine 304, isoleucine 306, and glutamate 308 each contribute to the Ca(2+) site. The Cytoplasmic segment spans residues 313–699; the sequence is VVTVTLALGV…EEGKGIYNNI (387 aa). The active-site 4-aspartylphosphate intermediate is aspartate 350. Mg(2+) is bound by residues aspartate 644 and aspartate 648. Residues 700–719 traverse the membrane as a helical segment; the sequence is KNFVRFQLSTSIAALTLISL. Residues 720–729 lie on the Lumenal side of the membrane; sequence ATLMNFPNPL. A helical membrane pass occupies residues 730–750; that stretch reads NAMQILWINIIMDGPPAQSLG. Positions 738 and 742 each coordinate Ca(2+). Residues 751–770 are Cytoplasmic-facing; that stretch reads VEPVDKDVIRKPPRNWKDSI. Residues 771–793 form a helical membrane-spanning segment; sequence LTKNLILKILVSSIIIVCGTLFV. Over 794–808 the chain is Lumenal; that stretch reads FWRELRDNVITPRDT. The helical transmembrane segment at 809–828 threads the bilayer; it reads TMTFTCFVFFDMFNALSSRS. Residues 829–841 are Cytoplasmic-facing; the sequence is QTKSVFEIGLCSN. Residues 842-860 form a helical membrane-spanning segment; the sequence is RMFCYAVLGSIMGQLLVIY. Residues 861 to 875 are Lumenal-facing; sequence FPPLQKVFQTESLSI. Residues 876–896 form a helical membrane-spanning segment; that stretch reads LDLLFLLGLTSSVCIVAEIIK. The Cytoplasmic portion of the chain corresponds to 897-919; the sequence is KVERSREKIQKHVSSTSSSFLEV.

This sequence belongs to the cation transport ATPase (P-type) (TC 3.A.3) family. Type IIA subfamily. Monomer. Homodimer. As to expression, found in most tissues except colon, thymus, spleen and leukocytes. Expressed in keratinocytes (at protein level).

It is found in the golgi apparatus. It localises to the trans-Golgi network membrane. Its subcellular location is the golgi stack membrane. The enzyme catalyses Ca(2+)(in) + ATP + H2O = Ca(2+)(out) + ADP + phosphate + H(+). The catalysed reaction is Mn(2+)(in) + ATP + H2O = Mn(2+)(out) + ADP + phosphate + H(+). Its function is as follows. ATP-driven pump that supplies the Golgi apparatus with Ca(2+) and Mn(2+) ions, both essential cofactors for processing and trafficking of newly synthesized proteins in the secretory pathway. Within a catalytic cycle, acquires Ca(2+) or Mn(2+) ions on the cytoplasmic side of the membrane and delivers them to the lumenal side. The transfer of ions across the membrane is coupled to ATP hydrolysis and is associated with a transient phosphorylation that shifts the pump conformation from inward-facing to outward-facing state. Plays a primary role in the maintenance of Ca(2+) homeostasis in the trans-Golgi compartment with a functional impact on Golgi and post-Golgi protein sorting as well as a structural impact on cisternae morphology. Responsible for loading the Golgi stores with Ca(2+) ions in keratinocytes, contributing to keratinocyte differentiation and epidermis integrity. Participates in Ca(2+) and Mn(2+) ions uptake into the Golgi store of hippocampal neurons and regulates protein trafficking required for neural polarity. May also play a role in the maintenance of Ca(2+) and Mn(2+) homeostasis and signaling in the cytosol while preventing cytotoxicity. The sequence is that of Calcium-transporting ATPase type 2C member 1 from Homo sapiens (Human).